The primary structure comprises 388 residues: Carbamoyl phosphate synthase small chain (388 aa).

The interval 1 to 194 (MAQNPLSKPT…WPEGYARQEA (194 aa)) is CPSase. L-glutamine is bound by residues S53, G246, and G248. The region spanning 198–387 (KVVAIDYGAK…AAAMDAQKAE (190 aa)) is the Glutamine amidotransferase type-1 domain. Catalysis depends on C276, which acts as the Nucleophile. L277, Q280, N318, G320, and F321 together coordinate L-glutamine. Catalysis depends on residues H360 and E362.

This sequence belongs to the CarA family. Composed of two chains; the small (or glutamine) chain promotes the hydrolysis of glutamine to ammonia, which is used by the large (or ammonia) chain to synthesize carbamoyl phosphate. Tetramer of heterodimers (alpha,beta)4.

It carries out the reaction hydrogencarbonate + L-glutamine + 2 ATP + H2O = carbamoyl phosphate + L-glutamate + 2 ADP + phosphate + 2 H(+). The catalysed reaction is L-glutamine + H2O = L-glutamate + NH4(+). The protein operates within amino-acid biosynthesis; L-arginine biosynthesis; carbamoyl phosphate from bicarbonate: step 1/1. It participates in pyrimidine metabolism; UMP biosynthesis via de novo pathway; (S)-dihydroorotate from bicarbonate: step 1/3. Its function is as follows. Small subunit of the glutamine-dependent carbamoyl phosphate synthetase (CPSase). CPSase catalyzes the formation of carbamoyl phosphate from the ammonia moiety of glutamine, carbonate, and phosphate donated by ATP, constituting the first step of 2 biosynthetic pathways, one leading to arginine and/or urea and the other to pyrimidine nucleotides. The small subunit (glutamine amidotransferase) binds and cleaves glutamine to supply the large subunit with the substrate ammonia. This is Carbamoyl phosphate synthase small chain from Ruegeria pomeroyi (strain ATCC 700808 / DSM 15171 / DSS-3) (Silicibacter pomeroyi).